The primary structure comprises 59 residues: U-limacoditoxin(3)-Dv33 (59 aa).

The signal sequence occupies residues 1-19 (MSKVILLCLIFALFACSIS).

It belongs to the limacoditoxin-3 family. In terms of processing, the natural peptide is not amidated. The recombinant peptide is amidated. As to expression, expressed by the venom secretory cell of the spine. The spine is a cuticular structure containing a single large nucleated venom-secreting cell at its base. It is an independent unit capable of producing, storing and injecting venom. On the back of D.vulnerans caterpillars, spines are grouped together by 50 to 100 to form scoli, of which there are eight in D.vulnerans.

The protein localises to the secreted. In terms of biological role, probable toxin. Shows a relatively potent antiparasitic activity against the major pathogenic nematode of ruminants (H.contortus, EC(50)=2.6 uM). Does not show insecticidal and antimicrobial activities. Does not induce increase in intracellular calcium in mouse DRG neurons, suggesting that it does not induce pain. In Doratifera vulnerans (Mottled cup moth), this protein is U-limacoditoxin(3)-Dv33.